A 323-amino-acid chain; its full sequence is D-alanine--D-alanine ligase (323 aa).

The ATP-grasp domain occupies 102-300 (KQIFRAEGIP…FTELVERMLQ (199 aa)). Residue 130-185 (VARLGSPLVVKPSNSGSTVGISLARDEVSLAQGLALASSVSSRVFLERYIPGKEIT) participates in ATP binding. Mg(2+)-binding residues include Asp254, Glu267, and Asn269.

It belongs to the D-alanine--D-alanine ligase family. It depends on Mg(2+) as a cofactor. Mn(2+) serves as cofactor.

Its subcellular location is the cytoplasm. The catalysed reaction is 2 D-alanine + ATP = D-alanyl-D-alanine + ADP + phosphate + H(+). The protein operates within cell wall biogenesis; peptidoglycan biosynthesis. Cell wall formation. This Synechococcus sp. (strain JA-3-3Ab) (Cyanobacteria bacterium Yellowstone A-Prime) protein is D-alanine--D-alanine ligase.